The chain runs to 126 residues: Large ribosomal subunit protein bL12 (126 aa).

Belongs to the bacterial ribosomal protein bL12 family. As to quaternary structure, homodimer. Part of the ribosomal stalk of the 50S ribosomal subunit. Forms a multimeric L10(L12)X complex, where L10 forms an elongated spine to which 2 to 4 L12 dimers bind in a sequential fashion. Binds GTP-bound translation factors.

Its function is as follows. Forms part of the ribosomal stalk which helps the ribosome interact with GTP-bound translation factors. Is thus essential for accurate translation. This chain is Large ribosomal subunit protein bL12, found in Caulobacter sp. (strain K31).